A 103-amino-acid chain; its full sequence is Large ribosomal subunit protein uL23 (103 aa).

The protein belongs to the universal ribosomal protein uL23 family. In terms of assembly, part of the 50S ribosomal subunit. Contacts protein L29, and trigger factor when it is bound to the ribosome.

One of the early assembly proteins it binds 23S rRNA. One of the proteins that surrounds the polypeptide exit tunnel on the outside of the ribosome. Forms the main docking site for trigger factor binding to the ribosome. In Chlorobium luteolum (strain DSM 273 / BCRC 81028 / 2530) (Pelodictyon luteolum), this protein is Large ribosomal subunit protein uL23.